We begin with the raw amino-acid sequence, 177 residues long: Iron-sulfur cluster assembly protein SufA (177 aa).

A signal peptide spans 1–18 (MTIHIFLCFLLILKIVNA). Residues Cys-101, Cys-169, and Cys-171 each contribute to the [4Fe-4S] cluster site.

It belongs to the HesB/IscA family. Homodimer. Homotetramer formation is observed in vitro.

It is found in the plastid. It localises to the apicoplast. It participates in cofactor biosynthesis; iron-sulfur cluster biosynthesis. Its function is as follows. Participates in the sulfur mobilization (SUF) pathway for iron-sulfur (Fe-S) cluster biogenesis. Involved in the pre-assembly of [4Fe-4S] clusters and their transfer to target proteins. The protein is Iron-sulfur cluster assembly protein SufA of Plasmodium falciparum (isolate 3D7).